Here is a 435-residue protein sequence, read N- to C-terminus: Eukaryotic peptide chain release factor subunit 1 (435 aa).

Belongs to the eukaryotic release factor 1 family. Heterodimer of two subunits, one of which binds GTP.

It is found in the cytoplasm. Functionally, directs the termination of nascent peptide synthesis (translation) in response to the termination codons UAA, UAG and UGA. The chain is Eukaryotic peptide chain release factor subunit 1 (SU2) from Podospora anserina (Pleurage anserina).